The following is an 88-amino-acid chain: Small ribosomal subunit protein bS16 (88 aa).

Belongs to the bacterial ribosomal protein bS16 family.

In Geobacter sulfurreducens (strain ATCC 51573 / DSM 12127 / PCA), this protein is Small ribosomal subunit protein bS16.